A 217-amino-acid chain; its full sequence is MNQTRIDFRQAKFLISAPDIAHLDKHLPGDVGVEIAFAGRSNAGKSSALNALTEQKSLARTSKTPGRTQLINVFELDAQRRLVDLPGYGFAKVPLEMKHKWQNALGEYLQKRACLSGVVVLMDIRHPLKDLDRQMIEWSVASEIPVLALLTKADKLGQSEKMKTVNAVRKELAEFGDWVSVEPFSALKGTGKPKVLAILDAWCHPDWLVEELEQAED.

Residues 31–205 (VGVEIAFAGR…LAILDAWCHP (175 aa)) form the EngB-type G domain. GTP-binding positions include 39–46 (GRSNAGKS), 66–70 (GRTQL), 84–87 (DLPG), 151–154 (TKAD), and 184–186 (FSA). Mg(2+)-binding residues include Ser46 and Thr68.

This sequence belongs to the TRAFAC class TrmE-Era-EngA-EngB-Septin-like GTPase superfamily. EngB GTPase family. It depends on Mg(2+) as a cofactor.

Necessary for normal cell division and for the maintenance of normal septation. This chain is Probable GTP-binding protein EngB, found in Shewanella amazonensis (strain ATCC BAA-1098 / SB2B).